A 267-amino-acid chain; its full sequence is HTH-type transcriptional activator CsvR (267 aa).

2 DNA-binding regions (H-T-H motif) span residues 183 to 204 (AIIADVFNVSEITIRKRLESED) and 230 to 253 (ISQISNMIGISSASYFIRIFNKHF).

In terms of assembly, homodimer.

Functionally, transcriptional activator of fimbrial genes in enterotoxigenic E.coli. The chain is HTH-type transcriptional activator CsvR from Escherichia coli.